Here is a 233-residue protein sequence, read N- to C-terminus: Purine nucleoside phosphorylase DeoD-type (233 aa).

H4 serves as a coordination point for a purine D-ribonucleoside. Phosphate contacts are provided by residues G20, R24, R43, and R87–T90. A purine D-ribonucleoside contacts are provided by residues E179–E181 and S203–D204. The active-site Proton donor is D204.

It belongs to the PNP/UDP phosphorylase family. Homohexamer; trimer of homodimers.

The catalysed reaction is a purine D-ribonucleoside + phosphate = a purine nucleobase + alpha-D-ribose 1-phosphate. It catalyses the reaction a purine 2'-deoxy-D-ribonucleoside + phosphate = a purine nucleobase + 2-deoxy-alpha-D-ribose 1-phosphate. In terms of biological role, catalyzes the reversible phosphorolytic breakdown of the N-glycosidic bond in the beta-(deoxy)ribonucleoside molecules, with the formation of the corresponding free purine bases and pentose-1-phosphate. The polypeptide is Purine nucleoside phosphorylase DeoD-type (Helicobacter pylori (strain ATCC 700392 / 26695) (Campylobacter pylori)).